A 586-amino-acid chain; its full sequence is Thioredoxin domain-containing protein 3 (586 aa).

The 107-residue stretch at 10-116 folds into the Thioredoxin domain; the sequence is LQSVVNSQNL…NRKVITLIDE (107 aa). Cysteines 39 and 42 form a disulfide. NDK stretches follow at residues 157 to 254, 312 to 452, and 453 to 586; these read MAII…VLEE, VQTT…STLA, and LIKP…NPEN.

It in the C-terminal section; belongs to the NDK family. Monomer. Testis-specific. Expressed mainly in round spermatids.

The protein localises to the cytoplasm. Functionally, probably required during the final stages of sperm tail maturation in the testis and/or epididymis, where extensive disulfide bonding of fibrous sheath (FS) proteins occurs. In vitro, it has neither nucleoside diphosphate kinase (NDPK) activity nor reducing activity on disulfide bonds. Exhibits a 3'-5' exonuclease activity with a preference for single-stranded DNA, suggesting roles in DNA proofreading and repair. The chain is Thioredoxin domain-containing protein 3 (Nme8) from Mus musculus (Mouse).